The sequence spans 81 residues: MLRQIIGQAKKHPSLIPLFVFIGTGATGATLYLLRLALFNPDVCWDRNNPEPWNKLGPNDQYKFYSVNVDYSKLKKERPDF.

At methionine 1–serine 14 the chain is on the mitochondrial matrix side. Residue lysine 10 is modified to N6-acetyllysine. The helical transmembrane segment at leucine 15 to alanine 37 threads the bilayer. Topologically, residues leucine 38–phenylalanine 81 are mitochondrial intermembrane. Phosphoserine is present on serine 66.

This sequence belongs to the complex IV NDUFA4 subunit family. As to quaternary structure, component of the cytochrome c oxidase (complex IV, CIV), a multisubunit enzyme composed of 14 subunits. The complex is composed of a catalytic core of 3 subunits MT-CO1, MT-CO2 and MT-CO3, encoded in the mitochondrial DNA, and 11 supernumerary subunits COX4I1 (or COX4I2), COX5A, COX5B, COX6A1 (or COX6A2), COX6B1 (or COX6B2), COX6C, COX7A2 (or COX7A1), COX7B, COX7C, COX8A and NDUFA4, which are encoded in the nuclear genome. The complex exists as a monomer or a dimer and forms supercomplexes (SCs) in the inner mitochondrial membrane with NADH-ubiquinone oxidoreductase (complex I, CI) and ubiquinol-cytochrome c oxidoreductase (cytochrome b-c1 complex, complex III, CIII), resulting in different assemblies (supercomplex SCI(1)III(2)IV(1) and megacomplex MCI(2)III(2)IV(2)). Interacts with RAB5IF. Interacts with FLVCR2; this interaction occurs in the absence of heme and is disrupted upon heme binding.

The protein localises to the mitochondrion inner membrane. In terms of biological role, component of the cytochrome c oxidase, the last enzyme in the mitochondrial electron transport chain which drives oxidative phosphorylation. The respiratory chain contains 3 multisubunit complexes succinate dehydrogenase (complex II, CII), ubiquinol-cytochrome c oxidoreductase (cytochrome b-c1 complex, complex III, CIII) and cytochrome c oxidase (complex IV, CIV), that cooperate to transfer electrons derived from NADH and succinate to molecular oxygen, creating an electrochemical gradient over the inner membrane that drives transmembrane transport and the ATP synthase. Cytochrome c oxidase is the component of the respiratory chain that catalyzes the reduction of oxygen to water. Electrons originating from reduced cytochrome c in the intermembrane space (IMS) are transferred via the dinuclear copper A center (CU(A)) of subunit 2 and heme A of subunit 1 to the active site in subunit 1, a binuclear center (BNC) formed by heme A3 and copper B (CU(B)). The BNC reduces molecular oxygen to 2 water molecules unsing 4 electrons from cytochrome c in the IMS and 4 protons from the mitochondrial matrix. NDUFA4 is required for complex IV maintenance. The sequence is that of Cytochrome c oxidase subunit NDUFA4 (NDUFA4) from Homo sapiens (Human).